Reading from the N-terminus, the 228-residue chain is DNA-3-methyladenine glycosylase 1 (228 aa).

D170 acts as the Proton acceptor in catalysis.

Belongs to the alkylbase DNA glycosidase AlkA family.

It carries out the reaction Hydrolysis of alkylated DNA, releasing 3-methyladenine, 3-methylguanine, 7-methylguanine and 7-methyladenine.. Hydrolysis of the deoxyribose N-glycosidic bond to excise 3-methyladenine or 7-methyladenine from the damaged DNA polymer formed by alkylation lesions. Can release ethylated and propylated bases from DNA in addition to 3-methyladenine. This is DNA-3-methyladenine glycosylase 1 (mag1) from Schizosaccharomyces pombe (strain 972 / ATCC 24843) (Fission yeast).